The chain runs to 106 residues: UPF0145 protein TM_0763 (106 aa).

The protein belongs to the UPF0145 family.

The polypeptide is UPF0145 protein TM_0763 (Thermotoga maritima (strain ATCC 43589 / DSM 3109 / JCM 10099 / NBRC 100826 / MSB8)).